The following is a 400-amino-acid chain: Casein kinase I homolog hhp2 (400 aa).

The Protein kinase domain occupies 12–278 (YRIGRKIGSG…YLRKLFRDLL (267 aa)). ATP is bound by residues 18 to 26 (IGSGSFGQI) and lysine 41. The active-site Proton acceptor is aspartate 131. Residues 330-352 (PNYSSIPLPAERNPKTPQSFSTN) are disordered.

It belongs to the protein kinase superfamily. CK1 Ser/Thr protein kinase family. Casein kinase I subfamily.

The protein localises to the nucleus. It carries out the reaction L-seryl-[protein] + ATP = O-phospho-L-seryl-[protein] + ADP + H(+). The enzyme catalyses L-threonyl-[protein] + ATP = O-phospho-L-threonyl-[protein] + ADP + H(+). In terms of biological role, involved in DNA repair. May regulate the activity of protein(s) involved in double strand break repair caused by gamma rays. The protein is Casein kinase I homolog hhp2 (hhp2) of Schizosaccharomyces pombe (strain 972 / ATCC 24843) (Fission yeast).